A 194-amino-acid chain; its full sequence is uncharacterized protein (194 aa).

This is an uncharacterized protein from Haemophilus influenzae (strain ATCC 51907 / DSM 11121 / KW20 / Rd).